Here is a 328-residue protein sequence, read N- to C-terminus: Tetraacyldisaccharide 4'-kinase (328 aa).

55 to 62 serves as a coordination point for ATP; that stretch reads TAGGNGKT.

It belongs to the LpxK family.

It catalyses the reaction a lipid A disaccharide + ATP = a lipid IVA + ADP + H(+). It functions in the pathway glycolipid biosynthesis; lipid IV(A) biosynthesis; lipid IV(A) from (3R)-3-hydroxytetradecanoyl-[acyl-carrier-protein] and UDP-N-acetyl-alpha-D-glucosamine: step 6/6. Transfers the gamma-phosphate of ATP to the 4'-position of a tetraacyldisaccharide 1-phosphate intermediate (termed DS-1-P) to form tetraacyldisaccharide 1,4'-bis-phosphate (lipid IVA). The sequence is that of Tetraacyldisaccharide 4'-kinase from Escherichia coli O127:H6 (strain E2348/69 / EPEC).